The following is a 274-amino-acid chain: Octanoyl-[GcvH]:protein N-octanoyltransferase (274 aa).

The BPL/LPL catalytic domain maps to Gln-37 to Ser-242. Catalysis depends on Cys-141, which acts as the Acyl-thioester intermediate.

This sequence belongs to the octanoyltransferase LipL family.

It catalyses the reaction N(6)-octanoyl-L-lysyl-[glycine-cleavage complex H protein] + L-lysyl-[lipoyl-carrier protein] = N(6)-octanoyl-L-lysyl-[lipoyl-carrier protein] + L-lysyl-[glycine-cleavage complex H protein]. Its pathway is protein modification; protein lipoylation via endogenous pathway; protein N(6)-(lipoyl)lysine from octanoyl-[acyl-carrier-protein]. Catalyzes the amidotransfer (transamidation) of the octanoyl moiety from octanoyl-GcvH to the lipoyl domain of the E2 subunit of lipoate-dependent enzymes. This Macrococcus caseolyticus (strain JCSC5402) (Macrococcoides caseolyticum) protein is Octanoyl-[GcvH]:protein N-octanoyltransferase.